The primary structure comprises 157 residues: Phosphopantetheine adenylyltransferase (157 aa).

Belongs to the eukaryotic CoaD family.

Its subcellular location is the cytoplasm. The catalysed reaction is (R)-4'-phosphopantetheine + ATP + H(+) = 3'-dephospho-CoA + diphosphate. It participates in cofactor biosynthesis; coenzyme A biosynthesis. Its function is as follows. Reversibly transfers an adenylyl group from ATP to 4'-phosphopantetheine, yielding dephospho-CoA (dPCoA) and pyrophosphate. The sequence is that of Phosphopantetheine adenylyltransferase from Methanopyrus kandleri (strain AV19 / DSM 6324 / JCM 9639 / NBRC 100938).